Reading from the N-terminus, the 653-residue chain is Putative clathrin assembly protein At2g25430 (653 aa).

The ENTH domain maps to 23-159 (VASNMAPDLE…ELALFERKSG (137 aa)). Residues 160–171 (VSVNSGGNSSHH) are compositionally biased toward low complexity. The tract at residues 160–240 (VSVNSGGNSS…GGGGGGRDEK (81 aa)) is disordered. Residues 172–186 (SNNDDRYGRGRDDFR) show a composition bias toward basic and acidic residues. Over residues 197–214 (NGGGGGSDFRGDNNGYGG) the composition is skewed to gly residues. Serine 221 carries the post-translational modification Phosphoserine. Threonine 244 is subject to Phosphothreonine. Over residues 376–389 (RAKRGKSPERKEIE) the composition is skewed to basic and acidic residues. A disordered region spans residues 376-431 (RAKRGKSPERKEIEAPPPVVEEEEPEPDMNEIKALPPPENYTPPPPPEPEPQPEKP). The segment covering 395–404 (VEEEEPEPDM) has biased composition (acidic residues). The span at 410–425 (LPPPENYTPPPPPEPE) shows a compositional bias: pro residues.

The protein resides in the membrane. It is found in the clathrin-coated pit. The protein localises to the golgi apparatus. Its subcellular location is the cytoplasmic vesicle. It localises to the clathrin-coated vesicle. This chain is Putative clathrin assembly protein At2g25430, found in Arabidopsis thaliana (Mouse-ear cress).